The primary structure comprises 344 residues: Type VI secretion system component TssA1 (344 aa).

In terms of assembly, homododecamer. Interacts with TssB1 and TssC1. Interacts with TssK1 and TssF1.

Core component of the H1 type VI (H1-T6SS) secretion system that plays a role in the release of toxins targeting both eukaryotic and prokaryotic species. Forms a dodecameric ring-shaped structure located at one end of the T6SS sheath. May properly attach the pre-assembled sheath onto the baseplate and/or stabilize the sheaths tubular structure. The sequence is that of Type VI secretion system component TssA1 from Pseudomonas aeruginosa (strain ATCC 15692 / DSM 22644 / CIP 104116 / JCM 14847 / LMG 12228 / 1C / PRS 101 / PAO1).